The chain runs to 220 residues: Uracil-DNA glycosylase 1 (220 aa).

Aspartate 65 acts as the Proton acceptor in catalysis.

This sequence belongs to the uracil-DNA glycosylase (UDG) superfamily. UNG family.

The protein resides in the cytoplasm. It carries out the reaction Hydrolyzes single-stranded DNA or mismatched double-stranded DNA and polynucleotides, releasing free uracil.. In terms of biological role, excises uracil residues from the DNA which can arise as a result of misincorporation of dUMP residues by DNA polymerase or due to deamination of cytosine. This Bacteroides fragilis (strain ATCC 25285 / DSM 2151 / CCUG 4856 / JCM 11019 / LMG 10263 / NCTC 9343 / Onslow / VPI 2553 / EN-2) protein is Uracil-DNA glycosylase 1.